A 285-amino-acid polypeptide reads, in one-letter code: Acetyl-coenzyme A carboxylase carboxyl transferase subunit beta (285 aa).

The region spanning 29-285 (IMTKCPKCKK…ILKIHQEVSN (257 aa)) is the CoA carboxyltransferase N-terminal domain. Residues Cys-33, Cys-36, Cys-52, and Cys-55 each contribute to the Zn(2+) site. The C4-type zinc-finger motif lies at 33 to 55 (CPKCKKIMYTKELNENLNVCFNC).

Belongs to the AccD/PCCB family. Acetyl-CoA carboxylase is a heterohexamer composed of biotin carboxyl carrier protein (AccB), biotin carboxylase (AccC) and two subunits each of ACCase subunit alpha (AccA) and ACCase subunit beta (AccD). It depends on Zn(2+) as a cofactor.

Its subcellular location is the cytoplasm. The catalysed reaction is N(6)-carboxybiotinyl-L-lysyl-[protein] + acetyl-CoA = N(6)-biotinyl-L-lysyl-[protein] + malonyl-CoA. It functions in the pathway lipid metabolism; malonyl-CoA biosynthesis; malonyl-CoA from acetyl-CoA: step 1/1. Component of the acetyl coenzyme A carboxylase (ACC) complex. Biotin carboxylase (BC) catalyzes the carboxylation of biotin on its carrier protein (BCCP) and then the CO(2) group is transferred by the transcarboxylase to acetyl-CoA to form malonyl-CoA. The protein is Acetyl-coenzyme A carboxylase carboxyl transferase subunit beta of Staphylococcus epidermidis (strain ATCC 12228 / FDA PCI 1200).